The primary structure comprises 144 residues: Leghemoglobin-1 (144 aa).

The 143-residue stretch at 2–144 (GFTEKQEALV…DGLATAIKAA (143 aa)) folds into the Globin domain. Nitrated tyrosine occurs at positions 25 and 30. S45 is a heme b binding site. S45 carries the post-translational modification Phosphoserine. H62 provides a ligand contact to O2. Residues K65, H93, and K96 each contribute to the heme b site. Y134 carries the post-translational modification Nitrated tyrosine.

It belongs to the plant globin family. As to quaternary structure, monomer. Post-translationally, nitrated in effective nodules and particularly in hypoxic conditions; this mechanism may play a protective role in the symbiosis by buffering toxic peroxynitrite NO(2)(-). Nitration level decrease during nodule senescence. In terms of processing, phosphorylation at Ser-45 disrupts the molecular environment of its porphyrin ring oxygen binding pocket, thus leading to a reduced oxygen consumption and to the delivery of oxygen O(2) to symbiosomes. As to expression, root nodules.

Its subcellular location is the cytoplasm. It is found in the cytosol. It localises to the nucleus. In terms of biological role, leghemoglobin that reversibly binds oxygen O(2) through a pentacoordinated heme iron. In root nodules, facilitates the diffusion of oxygen to the bacteroids while preventing the bacterial nitrogenase from being inactivated by buffering dioxygen, nitric oxide and carbon monoxide, and promoting the formation of reactive oxygen species (ROS, e.g. H(2)O(2)). This role is essential for symbiotic nitrogen fixation (SNF). The sequence is that of Leghemoglobin-1 from Vicia faba (Broad bean).